A 427-amino-acid polypeptide reads, in one-letter code: MHHNSQSLSSGHIRSPEDENVAPIGNLKHRTGSLSHISSAHPRVALSDVTNIVATNSSNNSISKPKVAPIKERLDSAAIIEEERLDANSVAQRKEADHNDLLTDREQEEPVEDDGESEEDEEEDQEPLLLQHYASDTLVWEHAFRTYYRTTLDPNDDDVYDVVMVAELSNEIFEYMRKLEDLYKPNPYYMDKQPELRWSFRSTLIDWIVQVHEKFQLLPETLYLCINIIDRYLCKEVVPVNKFQLVGAASLFIAAKYEEINCPTIKDFVYMSENCYSRNDLLDAERTILNGLEFELGWPGPMSFLRRISKADDYEHDTRTLAKYLLESTIMDHRLVSAQPSWLAAGAYFLSKIILGQNQWSLAHVYYSNYTQEQILPLATIILENCRYASKRHNAIWRKYSSRRYLHSSQIVAKWIALAEHRVERSN.

Polar residues predominate over residues 1-12 (MHHNSQSLSSGH). Disordered regions lie at residues 1–29 (MHHN…NLKH) and 89–126 (SVAQ…EDQE). Basic and acidic residues predominate over residues 89–105 (SVAQRKEADHNDLLTDR). Residues 106-126 (EQEEPVEDDGESEEDEEEDQE) are compositionally biased toward acidic residues.

Belongs to the cyclin family. Cyclin AB subfamily.

In terms of biological role, essential for the control of the cell cycle at the G2/M (mitosis) transition. Interacts with the CDC2 protein kinase to form MPF. G2/M cyclins accumulate steadily during G2 and are abruptly destroyed at mitosis. The chain is G2/mitotic-specific cyclin-3 (CLB3) from Saccharomyces cerevisiae (strain ATCC 204508 / S288c) (Baker's yeast).